The following is a 382-amino-acid chain: Inactive ubiquitin-specific protease 5 (382 aa).

One can recognise a DUSP domain in the interval 16–141 (VPAEEERALI…GGPTLPRKAI (126 aa)). The USP domain occupies 323–382 (TGLLNLGNTCFMNSAIQCLVHTPEFARYFREDYHREINWQNPLGMVVSTLSTSMALKPYV).

This sequence belongs to the peptidase C19 family. As to expression, widely expressed with the highest expression in floral organs.

The protein resides in the cell membrane. Its function is as follows. Plays an important role in the development of floral organs and chloroplasts. Does not possess deubiquitinating enzyme activity in vitro. This Oryza sativa subsp. japonica (Rice) protein is Inactive ubiquitin-specific protease 5.